An 879-amino-acid polypeptide reads, in one-letter code: RNA-directed RNA polymerase (879 aa).

A GTP-binding site is contributed by 259 to 266; the sequence is GLPYVGRT. One can recognise a RdRp catalytic domain in the interval 398–598; it reads LVYADNIYIV…DKERLFCSAA (201 aa). The tract at residues 846–879 is disordered; the sequence is GAGTSRPMGMEAPTRSKNAVKMAKRRQRQKESRQ.

As to quaternary structure, interacts with VP3 in the cytoplasm. Post-translationally, may exist in multiple phosphorylated forms.

Its subcellular location is the virion. It carries out the reaction RNA(n) + a ribonucleoside 5'-triphosphate = RNA(n+1) + diphosphate. Its function is as follows. RNA-dependent RNA polymerase which is found both free and covalently attached to the genomic RNA. May also contain guanylyl and methyl transferase activities. This Gallus gallus (Chicken) protein is RNA-directed RNA polymerase (VP1).